The sequence spans 204 residues: Tat proofreading chaperone DmsD (204 aa).

Belongs to the TorD/DmsD family. DmsD subfamily. Monomer in solution.

Functionally, required for biogenesis/assembly of DMSO reductase, but not for the interaction of the DmsA signal peptide with the Tat system. May be part of a chaperone cascade complex that facilitates a folding-maturation pathway for the substrate protein. This Salmonella typhimurium (strain LT2 / SGSC1412 / ATCC 700720) protein is Tat proofreading chaperone DmsD.